A 579-amino-acid polypeptide reads, in one-letter code: Glutamine--tRNA ligase (579 aa).

A 'HIGH' region motif is present at residues 41–51; that stretch reads PEPNGYLHIGH. Residues 42 to 44 and 48 to 54 each bind ATP; these read EPN and HIGHAKA. D74 and Y218 together coordinate L-glutamine. Residues T237, 285-286, and 293-295 contribute to the ATP site; these read RL and MSK. Positions 292 to 296 match the 'KMSKS' region motif; that stretch reads VMSKR.

This sequence belongs to the class-I aminoacyl-tRNA synthetase family. As to quaternary structure, monomer.

It localises to the cytoplasm. The enzyme catalyses tRNA(Gln) + L-glutamine + ATP = L-glutaminyl-tRNA(Gln) + AMP + diphosphate. This is Glutamine--tRNA ligase from Xanthomonas campestris pv. campestris (strain 8004).